Reading from the N-terminus, the 287-residue chain is MQFLDFLIALLPALFWGSVVLINVFVGGGPYNQIRGTTLGALIVGLGLLITGFAKFNNPTVIIVGLISGALWAFGQANQLKSISLIGVSNTMPVSTGMQLVGTTLFSVIFLGEWSSMTQIIFGLIAMILLVTGVALTSLKAKNERQSDNPEFKKAMGILIVSTVGYVGFVVLGDIFGVGGTDALFFQSVGMAIGGFILSMNHKTSLKSTALNLLPGVIWGIGNLFMFYSQPKVGVATSFSLSQLLVIVSTLGGIFILGERKDRRQMTGIWVGIIIIVIAAIILGNLK.

A run of 9 helical transmembrane segments spans residues 7–29, 34–56, 58–75, 114–136, 156–178, 183–202, 209–228, 233–255, and 267–286; these read LIAL…VGGG, IRGT…FAKF, NPTV…WAFG, WSSM…GVAL, MGIL…IFGV, ALFF…SMNH, TALN…FMFY, VGVA…GGIF, and TGIW…LGNL.

This sequence belongs to the GRP transporter (TC 2.A.7.5) family.

The protein localises to the cell membrane. Functionally, involved in the uptake of glucose. The chain is Probable glucose uptake protein GlcU (glcU) from Staphylococcus aureus (strain MRSA252).